We begin with the raw amino-acid sequence, 97 residues long: YcgL domain-containing protein APP7_0754 (97 aa).

In terms of domain architecture, YcgL spans 6 to 90; that stretch reads NLCAIYKSPK…PPENLLKTFL (85 aa).

The polypeptide is YcgL domain-containing protein APP7_0754 (Actinobacillus pleuropneumoniae serotype 7 (strain AP76)).